Here is a 301-residue protein sequence, read N- to C-terminus: MFDVFGFYKFKKLTSLKKNKILLQDYLIKKNIRGTIIIANEGVNATISGKANDLKSTITKIKKILNFKKFDSENISKSKFQPFHKPKVKIKKEVVPMGLSLSSKNKKNNHIDPKKWNKLINDKDTLVLDSRKPFEYNVGTFKRSVNPDVANFREFPKYLNKLKKTKPIAMFCTGGIRCEKASVFLEKKGFKNVYQLKGGILNYLKNIKKKESLWNGECFVFDNRISVKHGLITGTYSMCSGCRKPVSPKDKKSKKYEEGVSCVNCHDNLTQTQKERFRMRQKQINLAKKTGSKHIFQKEFK.

The Rhodanese domain maps to Asn121 to Ser212. The active-site Cysteine persulfide intermediate is the Cys172.

It belongs to the TrhO family.

The catalysed reaction is uridine(34) in tRNA + AH2 + O2 = 5-hydroxyuridine(34) in tRNA + A + H2O. Functionally, catalyzes oxygen-dependent 5-hydroxyuridine (ho5U) modification at position 34 in tRNAs. The polypeptide is tRNA uridine(34) hydroxylase (Pelagibacter ubique (strain HTCC1062)).